Here is a 99-residue protein sequence, read N- to C-terminus: Integration host factor subunit alpha (99 aa).

The interval 49-75 is disordered; it reads FGNFDLRDKNQRPGRNPKTGEDIPITA.

The protein belongs to the bacterial histone-like protein family. In terms of assembly, heterodimer of an alpha and a beta chain.

Functionally, this protein is one of the two subunits of integration host factor, a specific DNA-binding protein that functions in genetic recombination as well as in transcriptional and translational control. This chain is Integration host factor subunit alpha, found in Salmonella agona (strain SL483).